Reading from the N-terminus, the 312-residue chain is Zinc transporter ZitB (312 aa).

Transmembrane regions (helical) follow at residues 16 to 36 (LLIAFAITTLFMVTEAIGGWL), 40 to 60 (LALLADAGHMLTDSAALFIAL), 81 to 101 (LTTLAAFVNAAALLLIVILIV), 117 to 137 (TPMLIIAIAGLLANIFCFWIL), 153 to 173 (LHVLSDLLGSVGAMIAAIVIL), and 177 to 197 (WTPIDPILSVLVSVLILRSAW).

Belongs to the cation diffusion facilitator (CDF) transporter (TC 2.A.4) family. SLC30A subfamily.

The protein localises to the cell inner membrane. Functionally, involved in zinc efflux across the cytoplasmic membrane, thus reducing zinc accumulation in the cytoplasm and rendering bacteria more resistant to zinc. It may contribute to zinc homeostasis at low concentrations of zinc. This is Zinc transporter ZitB from Yersinia pestis.